The following is a 499-amino-acid chain: Neuronal acetylcholine receptor subunit alpha-7 (499 aa).

An N-terminal signal peptide occupies residues 1–19 (MRGSLCLALAASILHVSLQ). Residues 20–230 (GEFQRKLYKD…VSIRRRTLYY (211 aa)) are Extracellular-facing. 2 residues coordinate Ca(2+): R39 and V41. 3 N-linked (GlcNAc...) asparagine glycosylation sites follow: N43, N87, and N130. A disulfide bond links C147 and C161. Positions 169 and 207 each coordinate Ca(2+). C209 and C210 are joined by a disulfide. The next 3 membrane-spanning stretches (helical) occupy residues 231–251 (GLNL…VFLL), 259–279 (ISLG…VAEI), and 292–312 (QYFA…VIVL). An essential for TMEM35A/NACHO-mediated proper subunit assembly and trafficking to cell membrane region spans residues 257–264 (EKISLGIT). The Cytoplasmic segment spans residues 313-466 (QYHHHDPDGG…WKFAACVVDR (154 aa)). A helical membrane pass occupies residues 467–487 (LCLMAFSVFTILCTIGILMSA).

Belongs to the ligand-gated ion channel (TC 1.A.9) family. Acetylcholine receptor (TC 1.A.9.1) subfamily. Alpha-7/CHRNA7 sub-subfamily. As to quaternary structure, homopentamer. Homooligomer of the short form gives rise to unfunctional channels, as does coexpression of both long and short forms of the receptor. Can also form heteropentamers with CHRNB2, mainly found in basal forebrain cholinergic neurons. Interacts with RIC3; which is required for proper folding and assembly. Interacts with LYPD6. Interacts with CANX. Post-translationally, glycosylations at Asn-43, Asn-87 and Asn-130 are essential for TMEM35A/NACHO-mediated proper subunit assembly and trafficking to the cell membrane. In terms of tissue distribution, at least in chromaffin cells.

It is found in the postsynaptic cell membrane. The protein localises to the cell membrane. It carries out the reaction Ca(2+)(in) = Ca(2+)(out). The catalysed reaction is K(+)(in) = K(+)(out). The enzyme catalyses Na(+)(in) = Na(+)(out). It catalyses the reaction choline(out) = choline(in). It carries out the reaction NH4(+)(in) = NH4(+)(out). The catalysed reaction is L-arginine(in) = L-arginine(out). The enzyme catalyses guanidine(out) = guanidine(in). Its activity is regulated as follows. Activated by a myriad of ligands such as acetylcholine, cytisine, nicotine, choline and epibatidine. Oligomeric amyloid-beta protein 42 activates specifially CHRNA7:CHRNB2 nAchRs. Activity is modulated by positive allosteric modulators (PAMs), such as flavonoids, with a wide range of chemical diversity, pharmacological sensitivity and efficacy. AChR activity is inhibited by the antagonists alpha-conotoxons RgIA, ImI and ImII, small disulfide-constrained peptides from cone snails. Alpha-conotoxin PnIC selectively inhibits CHRNA7:CHRNB2 over CHRNA7 homopentamer. Its function is as follows. Component of neuronal acetylcholine receptors (nAChRs) that function as pentameric, ligand-gated cation channels with high calcium permeability among other activities. nAChRs are excitatory neurotrasnmitter receptors formed by a collection of nAChR subunits known to mediate synaptic transmission in the nervous system and the neuromuscular junction. Each nAchR subunit confers differential attributes to channel properties, including activation, deactivation and desensitization kinetics, pH sensitivity, cation permeability, and binding to allosteric modulators. CHRNA7 forms homopentameric neuronal acetylcholine receptors abundantly expressed in the central nervous system, characterized by fast desensitization and high calcium permeability. Also forms heteropentamers with CHRNB2, mainly expressed in basal forebrain cholinergic neurons. Involved in the modulation of calcium-dependent signaling pathways and influences the release of neurotransmitters, including dopamine, glutamate and GABA. Also expressed in non-neuronal cells such as immune cells like lymphocytes, monocytes and macrophages. In T cells, activation induces metabotropic signaling that results in an increase of intracellular Ca2+ concentrations, independent of ionotropic receptor functions. In macrophages, required for acetylcholine-mediated inhibition of TNF and other inflammatory cytokine release. Once activated by acetylcholine, nicotine or other agonists, selectively inhibits production of pro-inflammatory cytokines while leaving anti-inflammatory cytokines undisturbed. Stimulates the cholinergic anti-inflammatory pathway, controlling inflammation by inhibiting NFKB nuclear translocation and activating the JAK2-STAT3 pathway, independently of ion channel activity. Also expressed in the urothelium where it modulates reflex bladder activity by increasing intracellular calcium through internal stores and decreasing basal ATP release. The chain is Neuronal acetylcholine receptor subunit alpha-7 (CHRNA7) from Bos taurus (Bovine).